A 403-amino-acid polypeptide reads, in one-letter code: Chorismate synthase (403 aa).

Positions 40 and 46 each coordinate NADP(+). FMN-binding positions include 140–142, 261–262, G305, 320–324, and R346; these read RSS, QA, and KPIST.

Belongs to the chorismate synthase family. In terms of assembly, homotetramer. FMNH2 serves as cofactor.

It carries out the reaction 5-O-(1-carboxyvinyl)-3-phosphoshikimate = chorismate + phosphate. It participates in metabolic intermediate biosynthesis; chorismate biosynthesis; chorismate from D-erythrose 4-phosphate and phosphoenolpyruvate: step 7/7. Catalyzes the anti-1,4-elimination of the C-3 phosphate and the C-6 proR hydrogen from 5-enolpyruvylshikimate-3-phosphate (EPSP) to yield chorismate, which is the branch point compound that serves as the starting substrate for the three terminal pathways of aromatic amino acid biosynthesis. This reaction introduces a second double bond into the aromatic ring system. The polypeptide is Chorismate synthase (Corynebacterium diphtheriae (strain ATCC 700971 / NCTC 13129 / Biotype gravis)).